Here is a 1486-residue protein sequence, read N- to C-terminus: Chromosome partition protein MukB (1486 aa).

34 to 41 lines the ATP pocket; it reads GGNGAGKS. Coiled coils occupy residues 326-418, 444-480, and 509-603; these read LEAD…QYNQ, LETFQAKELEATEKMLSLEQKMSMAQTAHSQFEQAYQ, and RHLA…RAPV. Residues 666 to 783 are flexible hinge; the sequence is PGGSEDQRLN…EVPLFGRAAR (118 aa). Coiled-coil stretches lie at residues 835 to 923, 977 to 1115, and 1209 to 1266; these read EAEI…AKLE, EMLS…TAKA, and VEAI…QNVS.

This sequence belongs to the SMC family. MukB subfamily. As to quaternary structure, homodimerization via its hinge domain. Binds to DNA via its C-terminal region. Interacts, and probably forms a ternary complex, with MukE and MukF via its C-terminal region. The complex formation is stimulated by calcium or magnesium. Interacts with tubulin-related protein FtsZ.

It localises to the cytoplasm. It is found in the nucleoid. Its function is as follows. Plays a central role in chromosome condensation, segregation and cell cycle progression. Functions as a homodimer, which is essential for chromosome partition. Involved in negative DNA supercoiling in vivo, and by this means organize and compact chromosomes. May achieve or facilitate chromosome segregation by condensation DNA from both sides of a centrally located replisome during cell division. The polypeptide is Chromosome partition protein MukB (Escherichia coli O127:H6 (strain E2348/69 / EPEC)).